A 443-amino-acid chain; its full sequence is Trigger factor (443 aa).

The 86-residue stretch at 161 to 246 folds into the PPIase FKBP-type domain; it reads ADGVTITYHG…VISVTAPRLP (86 aa).

The protein belongs to the FKBP-type PPIase family. Tig subfamily.

Its subcellular location is the cytoplasm. It catalyses the reaction [protein]-peptidylproline (omega=180) = [protein]-peptidylproline (omega=0). Functionally, involved in protein export. Acts as a chaperone by maintaining the newly synthesized protein in an open conformation. Functions as a peptidyl-prolyl cis-trans isomerase. The sequence is that of Trigger factor from Nitrosococcus oceani (strain ATCC 19707 / BCRC 17464 / JCM 30415 / NCIMB 11848 / C-107).